The chain runs to 521 residues: Bifunctional purine biosynthesis protein PurH (521 aa).

In terms of domain architecture, MGS-like spans 1-145; it reads MIKQALISVS…KNHRDVTVVV (145 aa).

This sequence belongs to the PurH family.

It catalyses the reaction (6R)-10-formyltetrahydrofolate + 5-amino-1-(5-phospho-beta-D-ribosyl)imidazole-4-carboxamide = 5-formamido-1-(5-phospho-D-ribosyl)imidazole-4-carboxamide + (6S)-5,6,7,8-tetrahydrofolate. The enzyme catalyses IMP + H2O = 5-formamido-1-(5-phospho-D-ribosyl)imidazole-4-carboxamide. It participates in purine metabolism; IMP biosynthesis via de novo pathway; 5-formamido-1-(5-phospho-D-ribosyl)imidazole-4-carboxamide from 5-amino-1-(5-phospho-D-ribosyl)imidazole-4-carboxamide (10-formyl THF route): step 1/1. Its pathway is purine metabolism; IMP biosynthesis via de novo pathway; IMP from 5-formamido-1-(5-phospho-D-ribosyl)imidazole-4-carboxamide: step 1/1. This is Bifunctional purine biosynthesis protein PurH from Paraburkholderia xenovorans (strain LB400).